We begin with the raw amino-acid sequence, 134 residues long: Small ribosomal subunit protein uS8c (134 aa).

The protein belongs to the universal ribosomal protein uS8 family. As to quaternary structure, part of the 30S ribosomal subunit.

The protein resides in the plastid. It localises to the chloroplast. Its function is as follows. One of the primary rRNA binding proteins, it binds directly to 16S rRNA central domain where it helps coordinate assembly of the platform of the 30S subunit. This Bigelowiella natans (Pedinomonas minutissima) protein is Small ribosomal subunit protein uS8c (rps8).